We begin with the raw amino-acid sequence, 271 residues long: Phosphate import ATP-binding protein PstB 2 (271 aa).

Positions 1–20 (MLTKKPEINTILQTTPDPHS) are disordered. Positions 25–266 (MATEDLHVYY…PQEKQTEDYI (242 aa)) constitute an ABC transporter domain. 57 to 64 (GPSGCGKS) contributes to the ATP binding site.

The protein belongs to the ABC transporter superfamily. Phosphate importer (TC 3.A.1.7) family. The complex is composed of two ATP-binding proteins (PstB), two transmembrane proteins (PstC and PstA) and a solute-binding protein (PstS).

The protein localises to the cell membrane. It catalyses the reaction phosphate(out) + ATP + H2O = ADP + 2 phosphate(in) + H(+). Functionally, part of the ABC transporter complex PstSACB involved in phosphate import. Responsible for energy coupling to the transport system. This chain is Phosphate import ATP-binding protein PstB 2, found in Listeria innocua serovar 6a (strain ATCC BAA-680 / CLIP 11262).